We begin with the raw amino-acid sequence, 146 residues long: Putative pre-16S rRNA nuclease (146 aa).

The protein belongs to the YqgF nuclease family.

It is found in the cytoplasm. Functionally, could be a nuclease involved in processing of the 5'-end of pre-16S rRNA. The sequence is that of Putative pre-16S rRNA nuclease from Methylobacillus flagellatus (strain ATCC 51484 / DSM 6875 / VKM B-1610 / KT).